The sequence spans 210 residues: UPF0301 protein Mnod_6933 (210 aa).

Belongs to the UPF0301 (AlgH) family.

The sequence is that of UPF0301 protein Mnod_6933 from Methylobacterium nodulans (strain LMG 21967 / CNCM I-2342 / ORS 2060).